Reading from the N-terminus, the 716-residue chain is DNA ligase (716 aa).

Residues D47–D51, S96–L97, and E130 contribute to the NAD(+) site. Catalysis depends on K132, which acts as the N6-AMP-lysine intermediate. The NAD(+) site is built by R153, E190, K306, and K330. C435, C438, C453, and C459 together coordinate Zn(2+). The region spanning R638–G716 is the BRCT domain.

Belongs to the NAD-dependent DNA ligase family. LigA subfamily. The cofactor is Mg(2+). Mn(2+) is required as a cofactor.

The enzyme catalyses NAD(+) + (deoxyribonucleotide)n-3'-hydroxyl + 5'-phospho-(deoxyribonucleotide)m = (deoxyribonucleotide)n+m + AMP + beta-nicotinamide D-nucleotide.. DNA ligase that catalyzes the formation of phosphodiester linkages between 5'-phosphoryl and 3'-hydroxyl groups in double-stranded DNA using NAD as a coenzyme and as the energy source for the reaction. It is essential for DNA replication and repair of damaged DNA. The chain is DNA ligase from Nitrobacter winogradskyi (strain ATCC 25391 / DSM 10237 / CIP 104748 / NCIMB 11846 / Nb-255).